We begin with the raw amino-acid sequence, 67 residues long: ATP synthase F(0) complex subunit 8 (67 aa).

Residues 8–24 traverse the membrane as a helical segment; sequence TWSITIMSMIMTLFIVF. Lysine 54 carries the post-translational modification N6-acetyllysine; alternate. Lysine 54 carries the N6-succinyllysine; alternate modification. Lysine 57 bears the N6-acetyllysine mark.

Belongs to the ATPase protein 8 family. In terms of assembly, component of the ATP synthase complex composed at least of ATP5F1A/subunit alpha, ATP5F1B/subunit beta, ATP5MC1/subunit c (homooctomer), MT-ATP6/subunit a, MT-ATP8/subunit 8, ATP5ME/subunit e, ATP5MF/subunit f, ATP5MG/subunit g, ATP5MK/subunit k, ATP5MJ/subunit j, ATP5F1C/subunit gamma, ATP5F1D/subunit delta, ATP5F1E/subunit epsilon, ATP5PF/subunit F6, ATP5PB/subunit b, ATP5PD/subunit d, ATP5PO/subunit OSCP. ATP synthase complex consists of a soluble F(1) head domain (subunits alpha(3) and beta(3)) - the catalytic core - and a membrane F(0) domain - the membrane proton channel (subunits c, a, 8, e, f, g, k and j). These two domains are linked by a central stalk (subunits gamma, delta, and epsilon) rotating inside the F1 region and a stationary peripheral stalk (subunits F6, b, d, and OSCP). Interacts with PRICKLE3.

It is found in the mitochondrion membrane. Subunit 8, of the mitochondrial membrane ATP synthase complex (F(1)F(0) ATP synthase or Complex V) that produces ATP from ADP in the presence of a proton gradient across the membrane which is generated by electron transport complexes of the respiratory chain. ATP synthase complex consist of a soluble F(1) head domain - the catalytic core - and a membrane F(1) domain - the membrane proton channel. These two domains are linked by a central stalk rotating inside the F(1) region and a stationary peripheral stalk. During catalysis, ATP synthesis in the catalytic domain of F(1) is coupled via a rotary mechanism of the central stalk subunits to proton translocation. In vivo, can only synthesize ATP although its ATP hydrolase activity can be activated artificially in vitro. Part of the complex F(0) domain. This Felis catus (Cat) protein is ATP synthase F(0) complex subunit 8.